The chain runs to 88 residues: U1-hexatoxin-Iw1c (88 aa).

Positions 1 to 17 (LKFVVLICLVIMASTSA) are cleaved as a signal peptide. Glutamine 18 bears the Pyrrolidone carboxylic acid mark. Disulfide bonds link cysteine 20-cysteine 31, cysteine 25-cysteine 39, cysteine 30-cysteine 65, cysteine 49-cysteine 73, and cysteine 67-cysteine 80. A propeptide spanning residues 86–88 (RSE) is cleaved from the precursor.

The protein belongs to the MIT-like AcTx family. In terms of tissue distribution, expressed by the venom gland.

It is found in the secreted. The polypeptide is U1-hexatoxin-Iw1c (Illawarra wisharti (Illawarra funnel-web spider)).